Here is a 507-residue protein sequence, read N- to C-terminus: Photosystem II CP47 reaction center protein (507 aa).

Residues 2–16 lie on the Cytoplasmic side of the membrane; it reads GLPWYRVHTVVLNDP. The chain crosses the membrane as a helical span at residues 17–39; the sequence is GRLISVHLMHTALVAGWAGSMAL. Over 40 to 94 the chain is Lumenal, thylakoid; sequence YELAIFDSSDAVLNPMWRQGMFVLPFMARLGVTSSWNGWSVTGETGLDPGFWSFE. Residues 95 to 116 form a helical membrane-spanning segment; it reads GVAAAHIVLSGLLFLAAVWHWV. Residues 117–134 lie on the Cytoplasmic side of the membrane; it reads FWDLELFVDPRTGESALD. A helical transmembrane segment spans residues 135 to 159; the sequence is LPKMFGIHLFLSGLLCFGFGAFHLT. Over 160-196 the chain is Lumenal, thylakoid; that stretch reads GVWGPGMWVSDPYGLTGHVQPVAPEWGPAGFNPFNPG. A helical membrane pass occupies residues 197–218; that stretch reads GVVAHHIAAGIVGIIAGLFHLT. Residues 219 to 233 are Cytoplasmic-facing; that stretch reads VRPPERLYKALRMGN. Residues 234–255 traverse the membrane as a helical segment; it reads IETVLSSSIAAVFFAAFVVAGT. Over 256-450 the chain is Lumenal, thylakoid; the sequence is MWYGNATTPI…GVFRTSPRGW (195 aa). Residues 451–474 traverse the membrane as a helical segment; that stretch reads FTFGHAVFALLFFFGHIWHGSRTL. The Cytoplasmic portion of the chain corresponds to 475-507; the sequence is FRDVFAGVDPGLEEQVEFGVFAKVGDLSTRKEA.

It belongs to the PsbB/PsbC family. PsbB subfamily. In terms of assembly, PSII is composed of 1 copy each of membrane proteins PsbA, PsbB, PsbC, PsbD, PsbE, PsbF, PsbH, PsbI, PsbJ, PsbK, PsbL, PsbM, PsbT, PsbX, Psb30/Ycf12, peripheral proteins PsbO, CyanoQ (PsbQ), PsbU, PsbV and a large number of cofactors. It forms dimeric complexes. Contacts PsbQ. Binds multiple chlorophylls. PSII binds additional chlorophylls, carotenoids and specific lipids. is required as a cofactor.

It is found in the cellular thylakoid membrane. Its function is as follows. One of the components of the core complex of photosystem II (PSII). It binds chlorophyll and helps catalyze the primary light-induced photochemical processes of PSII. PSII is a light-driven water:plastoquinone oxidoreductase, using light energy to abstract electrons from H(2)O, generating O(2) and a proton gradient subsequently used for ATP formation. The chain is Photosystem II CP47 reaction center protein from Synechocystis sp. (strain ATCC 27184 / PCC 6803 / Kazusa).